We begin with the raw amino-acid sequence, 416 residues long: Tyrosine-protein phosphatase non-receptor type 2 (416 aa).

The region spanning 5 to 275 (IEREFEELDA…RFSYMAIIEG (271 aa)) is the Tyrosine-protein phosphatase domain. Tyr-22 bears the Phosphotyrosine mark. The residue at position 52 (Ser-52) is a Phosphoserine. Tyr-68 carries the phosphotyrosine modification. Residues Asp-182, 216–222 (CSAGIGR), and Gln-260 each bind substrate. Cys-216 serves as the catalytic Phosphocysteine intermediate. Residue Cys-216 is modified to S-nitrosocysteine. A phosphoserine mark is found at Ser-293, Ser-298, Ser-304, Ser-320, and Ser-339. The segment at 341–410 (ESILRKRIRE…WTLLFQLNVL (70 aa)) is endoplasmic reticulum location. Residues 371–410 (ERKRKRWLYWQPILTKMGFVSVILVGALVGWTLLFQLNVL) are may mediate interaction with STX17.

It belongs to the protein-tyrosine phosphatase family. Non-receptor class 1 subfamily. As to quaternary structure, interacts with RMDN3. Interacts with TMED9. Interacts with STX17; dephosphorylates STX17. Interacts with ITGA1 (via cytoplasmic domain); activates the phosphatase activity towards EGFR. Interacts with TRAF2; probably involved in tumor necrosis factor-mediated signaling. Interacts with MET. Interacts with FAM220A and STAT3; interaction with FAM220A promotes interaction of PTPN2 with transcriptional activator STAT3, leading to dephosphorylation of STAT3 by PTPN2 and negative regulation of STAT3 transcriptional activator activity. Specifically phosphorylated in a cell cycle-dependent manner by cyclin-dependent kinases CDK1 and CDK2. Probably activated through phosphorylation by PKR. In terms of tissue distribution, does not show tissue- or cell-type specificity although levels of transcription show variability. Macrophages showed higher levels of expression than lymphocytes.

It is found in the cytoplasm. The protein resides in the endoplasmic reticulum-Golgi intermediate compartment. The protein localises to the endoplasmic reticulum. Its subcellular location is the nucleus membrane. It localises to the nucleus. It is found in the cell membrane. It catalyses the reaction O-phospho-L-tyrosyl-[protein] + H2O = L-tyrosyl-[protein] + phosphate. In terms of biological role, non-receptor type tyrosine-specific phosphatase that dephosphorylates receptor protein tyrosine kinases including INSR, EGFR, CSF1R, PDGFR. Also dephosphorylates non-receptor protein tyrosine kinases like JAK1, JAK2, JAK3, Src family kinases, STAT1, STAT3 and STAT6 either in the nucleus or the cytoplasm. Negatively regulates numerous signaling pathways and biological processes like hematopoiesis, inflammatory response, cell proliferation and differentiation, and glucose homeostasis. Plays a multifaceted and important role in the development of the immune system. Functions in T-cell receptor signaling through dephosphorylation of FYN and LCK to control T-cells differentiation and activation. Dephosphorylates CSF1R, negatively regulating its downstream signaling and macrophage differentiation. Negatively regulates cytokine (IL2/interleukin-2 and interferon)-mediated signaling through dephosphorylation of the cytoplasmic kinases JAK1, JAK3 and their substrate STAT1, that propagate signaling downstream of the cytokine receptors. Also regulates the IL6/interleukin-6 and IL4/interleukin-4 cytokine signaling through dephosphorylation of STAT3 and STAT6 respectively. In addition to the immune system, it is involved in anchorage-dependent, negative regulation of EGF-stimulated cell growth. Activated by the integrin ITGA1/ITGB1, it dephosphorylates EGFR and negatively regulates EGF signaling. Dephosphorylates PDGFRB and negatively regulates platelet-derived growth factor receptor-beta signaling pathway and therefore cell proliferation. Negatively regulates tumor necrosis factor-mediated signaling downstream via MAPK through SRC dephosphorylation. May also regulate the hepatocyte growth factor receptor signaling pathway through dephosphorylation of the hepatocyte growth factor receptor MET. Also plays an important role in glucose homeostasis. For instance, negatively regulates the insulin receptor signaling pathway through the dephosphorylation of INSR and control gluconeogenesis and liver glucose production through negative regulation of the IL6 signaling pathways. May also bind DNA. The chain is Tyrosine-protein phosphatase non-receptor type 2 (Ptpn2) from Rattus norvegicus (Rat).